Reading from the N-terminus, the 1398-residue chain is Disease resistance protein RPV1 (1398 aa).

The region spanning 22–185 (TTYDVFLSFR…EITNSIFRQL (164 aa)) is the TIR domain. Residues 31 to 36 (RGEDTR) and Gly-63 contribute to the NAD(+) site. The active site involves Glu-97. The NB-ARC domain occupies 201-440 (SHVKEMILRL…KRSYDGLDRI (240 aa)). LRR repeat units lie at residues 203–225 (VKEM…IYGV), 423–447 (KADI…IFLD), 478–504 (LNDL…GWEI), 535–560 (IKSV…VFAK), 610–632 (SYEL…NFDG), 633–657 (GKLV…DLER), 678–702 (MPNL…VGNM), 703–726 (KKLT…IGDL), 728–750 (SLES…GGNM), 751–773 (KSLT…IGDL), 775–797 (SLES…GGNM), 798–820 (KSLT…IGDL), 822–844 (SLEI…GGNM), 845–867 (KSLK…IGDL), 869–891 (SLKY…GGNM), 892–914 (KRLL…IGDL), 916–938 (SLKY…GGNM), 939–961 (KSLT…IGDL), 963–985 (SLEI…GGNM), 986–1008 (KSLK…IGDL), 1010–1032 (SLKY…GGNM), 1033–1055 (KSLL…IGDL), 1079–1102 (MKSL…IGDL), and 1105–1128 (LEML…AIDA). Over residues 1315–1328 (QNSGDNGSALQDAN) the composition is skewed to polar residues. A disordered region spans residues 1315 to 1336 (QNSGDNGSALQDANGNVHGANQ). Residues 1346–1369 (LDLLRNLSLGDNGSVVLEDTLGNR) form an LRR 25 repeat. Residues 1369–1373 (RKRRR) carry the Nuclear localization signal motif.

Belongs to the disease resistance TIR-NB-LRR family. Homodimer; homodimerization is required for NAD(+) hydrolase (NADase) activity.

It localises to the nucleus. Its subcellular location is the cytoplasm. It carries out the reaction NAD(+) + H2O = ADP-D-ribose + nicotinamide + H(+). Disease resistance (R) protein that confers resistance to multiple powdery and downy mildew by promoting cell death. Acts as a NAD(+) hydrolase (NADase): in response to activation, catalyzes cleavage of NAD(+) into ADP-D-ribose (ADPR) and nicotinamide; NAD(+) cleavage triggering a defense system that promotes cell death. The sequence is that of Disease resistance protein RPV1 from Vitis rotundifolia (Muscadine grape).